The chain runs to 1407 residues: Metabotropic glutamate receptor-like protein P (1407 aa).

The Extracellular segment spans residues 1 to 696 (MKFKKKNIYW…KTIKVTSFVK (696 aa)). 2 N-linked (GlcNAc...) asparagine glycosylation sites follow: Asn-43 and Asn-58. PbH1 repeat units lie at residues 93–118 (ISDI…FDGG) and 129–150 (FVNV…FLYN). 16 N-linked (GlcNAc...) asparagine glycosylation sites follow: Asn-162, Asn-179, Asn-182, Asn-230, Asn-241, Asn-270, Asn-368, Asn-391, Asn-464, Asn-512, Asn-539, Asn-544, Asn-554, Asn-571, Asn-627, and Asn-646. The stretch at 254 to 279 (ISNVIFESCEFIGNRANSTGGLSFLT) is one PbH1 3 repeat. The stretch at 452–476 (GYSVYIENCEVKNNTGLFKGCFIDT) is one PbH1 4 repeat. The helical transmembrane segment at 697–717 (FLVGTLAAILLIILIISGFIS) threads the bilayer. The Cytoplasmic portion of the chain corresponds to 718–731 (LKYRKKRVIRYSNP). Residues 732-752 (LFLCIILVGCIIFLITIPVLF) form a helical membrane-spanning segment. Residues 753 to 758 (GSTSAT) are Extracellular-facing. The chain crosses the membrane as a helical span at residues 759–779 (CKIRFPIIVIGSCLVTSSVFI). Over 780–806 (KQFRIWRLIKDIQLLRETNVENKYLLK) the chain is Cytoplasmic. The chain crosses the membrane as a helical span at residues 807 to 827 (FISILMVIPIIIVICSFFIFP). At 828-853 (THEKYTFNQRDITITHYCSDGSYLAY) the chain is on the extracellular side. Residues 854 to 874 (VIIFLVYQMAILLFGCYLVIV) traverse the membrane as a helical segment. The Cytoplasmic portion of the chain corresponds to 875–890 (CRKFRSIPGTFNEATY). Residues 891–911 (IGILIYNYTVVLIVAIPLAYV) traverse the membrane as a helical segment. Residues 912–919 (FNKNPLAN) are Extracellular-facing. The chain crosses the membrane as a helical span at residues 920–940 (FLIFSISIIVFVLSTIILLFI). Residues 941 to 1407 (PKFHFLLRKK…LSPINLSKRK (467 aa)) lie on the Cytoplasmic side of the membrane. Residues 991–1004 (QQRQGNLYNNNSLG) are compositionally biased toward polar residues. Disordered regions lie at residues 991-1072 (QQRQ…DPNF), 1084-1248 (GKRK…SSIG), 1267-1351 (KKVK…NFNE), and 1369-1407 (FHQK…SKRK). The span at 1005-1029 (RSISSNTRKRSNNNINNNNNNNSFN) shows a compositional bias: low complexity. Positions 1030-1040 (MTGFSDSSSTI) are enriched in polar residues. Positions 1041–1071 (SNPNLTSFTSSPSSLNSSSDSDSTPDFNDPN) are enriched in low complexity. The segment covering 1084 to 1093 (GKRKSIEKNK) has biased composition (basic and acidic residues). Low complexity-rich tracts occupy residues 1099 to 1147 (PNSP…NTPI), 1154 to 1246 (SSKT…SDSS), and 1276 to 1339 (SDST…NNNN). A coiled-coil region spans residues 1315–1344 (NNNNNNNNNNNNNINNNNNNANNNNSDTDD).

This sequence belongs to the G-protein coupled receptor 3 family. GABA-B receptor subfamily.

The protein resides in the membrane. This chain is Metabotropic glutamate receptor-like protein P (grlP), found in Dictyostelium discoideum (Social amoeba).